The following is a 120-amino-acid chain: Peptidyl-tRNA hydrolase (120 aa).

This sequence belongs to the PTH2 family. Homodimer.

Its subcellular location is the cytoplasm. It carries out the reaction an N-acyl-L-alpha-aminoacyl-tRNA + H2O = an N-acyl-L-amino acid + a tRNA + H(+). Its function is as follows. The natural substrate for this enzyme may be peptidyl-tRNAs which drop off the ribosome during protein synthesis. In Saccharolobus solfataricus (strain ATCC 35092 / DSM 1617 / JCM 11322 / P2) (Sulfolobus solfataricus), this protein is Peptidyl-tRNA hydrolase.